A 150-amino-acid chain; its full sequence is Arginine repressor (150 aa).

Belongs to the ArgR family.

Its subcellular location is the cytoplasm. Its pathway is amino-acid biosynthesis; L-arginine biosynthesis [regulation]. In terms of biological role, regulates arginine biosynthesis genes. The sequence is that of Arginine repressor from Clostridium acetobutylicum (strain ATCC 824 / DSM 792 / JCM 1419 / IAM 19013 / LMG 5710 / NBRC 13948 / NRRL B-527 / VKM B-1787 / 2291 / W).